Here is a 119-residue protein sequence, read N- to C-terminus: Protein TusC (119 aa).

This sequence belongs to the DsrF/TusC family. Heterohexamer, formed by a dimer of trimers. The hexameric TusBCD complex contains 2 copies each of TusB, TusC and TusD. The TusBCD complex interacts with TusE.

It localises to the cytoplasm. Its function is as follows. Part of a sulfur-relay system required for 2-thiolation of 5-methylaminomethyl-2-thiouridine (mnm(5)s(2)U) at tRNA wobble positions. This chain is Protein TusC, found in Escherichia coli O157:H7.